The chain runs to 189 residues: Peptidyl-tRNA hydrolase (189 aa).

TRNA is bound at residue tyrosine 15. Histidine 20 serves as the catalytic Proton acceptor. TRNA-binding residues include phenylalanine 66, asparagine 68, and asparagine 114.

The protein belongs to the PTH family. As to quaternary structure, monomer.

It localises to the cytoplasm. The enzyme catalyses an N-acyl-L-alpha-aminoacyl-tRNA + H2O = an N-acyl-L-amino acid + a tRNA + H(+). Its function is as follows. Hydrolyzes ribosome-free peptidyl-tRNAs (with 1 or more amino acids incorporated), which drop off the ribosome during protein synthesis, or as a result of ribosome stalling. In terms of biological role, catalyzes the release of premature peptidyl moieties from peptidyl-tRNA molecules trapped in stalled 50S ribosomal subunits, and thus maintains levels of free tRNAs and 50S ribosomes. This is Peptidyl-tRNA hydrolase from Streptococcus sanguinis (strain SK36).